The following is a 475-amino-acid chain: UDP-N-acetylmuramate--L-alanine ligase (475 aa).

112–118 is an ATP binding site; sequence GTHGKTT.

The protein belongs to the MurCDEF family.

The protein localises to the cytoplasm. It catalyses the reaction UDP-N-acetyl-alpha-D-muramate + L-alanine + ATP = UDP-N-acetyl-alpha-D-muramoyl-L-alanine + ADP + phosphate + H(+). It functions in the pathway cell wall biogenesis; peptidoglycan biosynthesis. Cell wall formation. This Methylobacillus flagellatus (strain ATCC 51484 / DSM 6875 / VKM B-1610 / KT) protein is UDP-N-acetylmuramate--L-alanine ligase.